We begin with the raw amino-acid sequence, 79 residues long: DNA-directed RNA polymerase subunit omega (79 aa).

This sequence belongs to the RNA polymerase subunit omega family. As to quaternary structure, the RNAP catalytic core consists of 2 alpha, 1 beta, 1 beta' and 1 omega subunit. When a sigma factor is associated with the core the holoenzyme is formed, which can initiate transcription.

It carries out the reaction RNA(n) + a ribonucleoside 5'-triphosphate = RNA(n+1) + diphosphate. Its function is as follows. Promotes RNA polymerase assembly. Latches the N- and C-terminal regions of the beta' subunit thereby facilitating its interaction with the beta and alpha subunits. The protein is DNA-directed RNA polymerase subunit omega (rpoZ) of Thermotoga maritima (strain ATCC 43589 / DSM 3109 / JCM 10099 / NBRC 100826 / MSB8).